Reading from the N-terminus, the 210-residue chain is T-cell antigen CD7 (210 aa).

The signal sequence occupies residues 1-23 (MTQQAVLALLLTLAGILPGPLDA). In terms of domain architecture, Ig-like spans 24–129 (QDVHQSPRLT…RGLFTTVVVK (106 aa)). Over 24–150 (QDVHQSPRLT…EPLQTSFSFP (127 aa)) the chain is Extracellular. Residues Asn42, Asn86, and Asn93 are each glycosylated (N-linked (GlcNAc...) asparagine). A disulfide bridge links Cys45 with Cys111. The helical transmembrane segment at 151-171 (AAIAVGFFFTGLLLGVVCSML) threads the bilayer. Cys168 carries S-palmitoyl cysteine lipidation. Over 172-210 (RKIQIKKLCASGIKESPCVVYEDMSYSNRKTPCIPNQYQ) the chain is Cytoplasmic.

Interacts with SECTM1.

It localises to the membrane. Its function is as follows. Transmembrane glycoprotein expressed by T-cells and natural killer (NK) cells and their precursors. Plays a costimulatory role in T-cell activation upon binding to its ligand K12/SECTM1. In turn, mediates the production of cytokines such as IL-2. On resting NK-cells, CD7 activation results in a significant induction of gamma-interferon levels. This chain is T-cell antigen CD7 (Cd7), found in Mus musculus (Mouse).